The chain runs to 325 residues: Tagatose 1,6-diphosphate aldolase (325 aa).

The protein belongs to the aldolase LacD family.

It catalyses the reaction D-tagatofuranose 1,6-bisphosphate = D-glyceraldehyde 3-phosphate + dihydroxyacetone phosphate. It functions in the pathway carbohydrate metabolism; D-tagatose 6-phosphate degradation; D-glyceraldehyde 3-phosphate and glycerone phosphate from D-tagatose 6-phosphate: step 2/2. The protein is Tagatose 1,6-diphosphate aldolase of Staphylococcus epidermidis (strain ATCC 12228 / FDA PCI 1200).